Reading from the N-terminus, the 369-residue chain is Probable N-acetyltransferase 16 (369 aa).

Residues 1 to 49 (MKLEASCGTATSEVPKPEKKTARDAEPSSETRPQEVEAEPRSGSGPEAE) form a disordered region. A compositionally biased stretch (basic and acidic residues) spans 15-26 (PKPEKKTARDAE). Positions 53–188 (LDFVVATERE…QGILLVRFNA (136 aa)) constitute an N-acetyltransferase domain.

Probable N-acetyltransferase. Shows only trace activity toward L-His and no N-acetyltransferase activity toward other amino acids. The physiological substrate of this enzyme is unknown. The chain is Probable N-acetyltransferase 16 (NAT16) from Homo sapiens (Human).